A 364-amino-acid polypeptide reads, in one-letter code: Peptide chain release factor 1 (364 aa).

Glutamine 232 carries the post-translational modification N5-methylglutamine.

This sequence belongs to the prokaryotic/mitochondrial release factor family. In terms of processing, methylated by PrmC. Methylation increases the termination efficiency of RF1.

It is found in the cytoplasm. Functionally, peptide chain release factor 1 directs the termination of translation in response to the peptide chain termination codons UAG and UAA. The chain is Peptide chain release factor 1 from Sorangium cellulosum (strain So ce56) (Polyangium cellulosum (strain So ce56)).